Consider the following 388-residue polypeptide: 4-hydroxycoumarin synthase 2 (388 aa).

Cys159 is an active-site residue.

The protein belongs to the thiolase-like superfamily. Chalcone/stilbene synthases family. In terms of assembly, homodimer.

It catalyses the reaction 2-hydroxybenzoyl-CoA + malonyl-CoA = 4-hydroxycoumarin + CO2 + 2 CoA. In terms of biological role, type III polyketide synthase involved preferentially in the biosynthesis of 4-hydroxycoumarin from salicoyl-CoA. Can also use benzoyl-CoA and malonyl-CoA to produce 3,5-dihydroxybiphenyl as a major product and benzoyldiacetic acid lactone as a minor side product. Can also use m-hydroxybenzoyl-CoA as substrate, producing m-hydroxybenzoyl diacetic acid lactone as a derailment product. No activity with p-hydroxybenzoyl-CoA, CoA-linked cinnamic acids or acetyl-CoA. The sequence is that of 4-hydroxycoumarin synthase 2 (BIS3) from Sorbus aucuparia (European mountain ash).